Consider the following 42-residue polypeptide: MEPVDPNLEPWNHPGSQPKTACNQCYCKKCSYHCLVCFLTKA.

Residues 1–24 are interaction with human CREBBP; that stretch reads MEPVDPNLEPWNHPGSQPKTACNQ. Positions 22–37 are cysteine-rich; it reads CNQCYCKKCSYHCLVC. Lys-28 carries the post-translational modification N6-acetyllysine; by host PCAF.

This sequence belongs to the lentiviruses Tat family. Interacts with host CCNT1. Associates with the P-TEFb complex composed at least of Tat, P-TEFb (CDK9 and CCNT1), TAR RNA, RNA Pol II. Recruits the HATs CREBBP, TAF1/TFIID, EP300, PCAF and GCN5L2. Interacts with host KAT5/Tip60; this interaction targets the latter to degradation. Interacts with the host deacetylase SIRT1. Interacts with host capping enzyme RNGTT; this interaction stimulates RNGTT. Binds to host KDR, and to the host integrins ITGAV/ITGB3 and ITGA5/ITGB1. Interacts with host KPNB1/importin beta-1 without previous binding to KPNA1/importin alpha-1. Interacts with EIF2AK2. Interacts with host nucleosome assembly protein NAP1L1; this interaction may be required for the transport of Tat within the nucleus, since the two proteins interact at the nuclear rim. Interacts with host C1QBP/SF2P32; this interaction involves lysine-acetylated Tat. Interacts with the host chemokine receptors CCR2, CCR3 and CXCR4. Interacts with host DPP4/CD26; this interaction may trigger an anti-proliferative effect. Interacts with host LDLR. Interacts with the host extracellular matrix metalloproteinase MMP1. Interacts with host PRMT6; this interaction mediates Tat's methylation. Interacts with, and is ubiquitinated by MDM2/Hdm2. Interacts with host PSMC3 and HTATIP2. Interacts with STAB1; this interaction may overcome SATB1-mediated repression of IL2 and IL2RA (interleukin) in T cells by binding to the same domain than HDAC1. Interacts (when acetylated) with human CDK13, thereby increasing HIV-1 mRNA splicing and promoting the production of the doubly spliced HIV-1 protein Nef. Interacts with host TBP; this interaction modulates the activity of transcriptional pre-initiation complex. Interacts with host RELA. Interacts with host PLSCR1; this interaction negatively regulates Tat transactivation activity by altering its subcellular distribution. Post-translationally, phosphorylated by EIF2AK2 on serine and threonine residues adjacent to the basic region important for TAR RNA binding and function. Phosphorylation of Tat by EIF2AK2 is dependent on the prior activation of EIF2AK2 by dsRNA. Asymmetrical arginine methylation by host PRMT6 seems to diminish the transactivation capacity of Tat and affects the interaction with host CCNT1. In terms of processing, polyubiquitination by host MDM2 does not target Tat to degradation, but activates its transactivation function and fosters interaction with CCNT1 and TAR RNA.

The protein localises to the host nucleus. It localises to the host nucleolus. Its subcellular location is the host cytoplasm. It is found in the secreted. Transcriptional activator that increases RNA Pol II processivity, thereby increasing the level of full-length viral transcripts. Recognizes a hairpin structure at the 5'-LTR of the nascent viral mRNAs referred to as the transactivation responsive RNA element (TAR) and recruits the cyclin T1-CDK9 complex (P-TEFb complex) that will in turn hyperphosphorylate the RNA polymerase II to allow efficient elongation. The CDK9 component of P-TEFb and other Tat-activated kinases hyperphosphorylate the C-terminus of RNA Pol II that becomes stabilized and much more processive. Other factors such as HTATSF1/Tat-SF1, SUPT5H/SPT5, and HTATIP2 are also important for Tat's function. Besides its effect on RNA Pol II processivity, Tat induces chromatin remodeling of proviral genes by recruiting the histone acetyltransferases (HATs) CREBBP, EP300 and PCAF to the chromatin. This also contributes to the increase in proviral transcription rate, especially when the provirus integrates in transcriptionally silent region of the host genome. To ensure maximal activation of the LTR, Tat mediates nuclear translocation of NF-kappa-B by interacting with host RELA. Through its interaction with host TBP, Tat may also modulate transcription initiation. Tat can reactivate a latently infected cell by penetrating in it and transactivating its LTR promoter. In the cytoplasm, Tat is thought to act as a translational activator of HIV-1 mRNAs. Functionally, extracellular circulating Tat can be endocytosed by surrounding uninfected cells via the binding to several surface receptors such as CD26, CXCR4, heparan sulfate proteoglycans (HSPG) or LDLR. Neurons are rarely infected, but they internalize Tat via their LDLR. Through its interaction with nuclear HATs, Tat is potentially able to control the acetylation-dependent cellular gene expression. Modulates the expression of many cellular genes involved in cell survival, proliferation or in coding for cytokines or cytokine receptors. Tat plays a role in T-cell and neurons apoptosis. Tat induced neurotoxicity and apoptosis probably contribute to neuroAIDS. Circulating Tat also acts as a chemokine-like and/or growth factor-like molecule that binds to specific receptors on the surface of the cells, affecting many cellular pathways. In the vascular system, Tat binds to ITGAV/ITGB3 and ITGA5/ITGB1 integrins dimers at the surface of endothelial cells and competes with bFGF for heparin-binding sites, leading to an excess of soluble bFGF. The chain is Protein Tat from Human immunodeficiency virus type 1 group M subtype C (isolate ETH2220) (HIV-1).